Here is a 231-residue protein sequence, read N- to C-terminus: Cytidylate kinase (231 aa).

Position 11–19 (11–19 (GHSSCGKST)) interacts with ATP.

This sequence belongs to the cytidylate kinase family. Type 1 subfamily.

It localises to the cytoplasm. The enzyme catalyses CMP + ATP = CDP + ADP. It carries out the reaction dCMP + ATP = dCDP + ADP. In Porphyromonas gingivalis (strain ATCC BAA-308 / W83), this protein is Cytidylate kinase.